A 361-amino-acid polypeptide reads, in one-letter code: Peptide chain release factor 1 (361 aa).

Residue Q236 is modified to N5-methylglutamine.

The protein belongs to the prokaryotic/mitochondrial release factor family. In terms of processing, methylated by PrmC. Methylation increases the termination efficiency of RF1.

The protein localises to the cytoplasm. Functionally, peptide chain release factor 1 directs the termination of translation in response to the peptide chain termination codons UAG and UAA. The polypeptide is Peptide chain release factor 1 (Lactobacillus acidophilus (strain ATCC 700396 / NCK56 / N2 / NCFM)).